A 322-amino-acid chain; its full sequence is N-acetyl-gamma-glutamyl-phosphate reductase 2 (322 aa).

The active site involves cysteine 117.

Belongs to the NAGSA dehydrogenase family. Type 2 subfamily.

The protein resides in the cytoplasm. It carries out the reaction N-acetyl-L-glutamate 5-semialdehyde + phosphate + NADP(+) = N-acetyl-L-glutamyl 5-phosphate + NADPH + H(+). Its pathway is amino-acid biosynthesis; L-arginine biosynthesis; N(2)-acetyl-L-ornithine from L-glutamate: step 3/4. Catalyzes the NADPH-dependent reduction of N-acetyl-5-glutamyl phosphate to yield N-acetyl-L-glutamate 5-semialdehyde. This is N-acetyl-gamma-glutamyl-phosphate reductase 2 from Nostoc sp. (strain PCC 7120 / SAG 25.82 / UTEX 2576).